Here is a 491-residue protein sequence, read N- to C-terminus: Myocilin (491 aa).

The first 18 residues, 1–18, serve as a signal peptide directing secretion; sequence MPAVQLLLLACPVWDVGA. The N-linked (GlcNAc...) asparagine glycan is linked to N43. The stretch at 98 to 171 forms a coiled coil; it reads QETPEGLQRE…QEVARLRRGQ (74 aa). The segment at 151 to 189 is disordered; sequence ENLARRLESSSQEVARLRRGQCPQTRDTARDVPPGSREV. An Olfactomedin-like domain is found at 231-490; that stretch reads GCGELVWVGE…MVTYDIKLSK (260 aa). C232 and C420 are disulfide-bonded. Ca(2+) is bound by residues D367, N415, A416, I464, and D465.

Homodimer (via N-terminus). Can also form higher oligomers. Interacts with OLFM3, FN1, NRCAM, GLDN and NFASC. Interacts (via N-terminus) with MYL2. Interacts with SFRP1, FRZB, FZD7, FZD10, FZD1 and WIF1; regulates Wnt signaling. Interacts with SNTA1; regulates muscle hypertrophy. Interacts with ERBB2 and ERBB3; activates ERBB2-ERBB3 signaling pathway. Interacts with SNCG; affects its secretion and its aggregation. Post-translationally, palmitoylated. In terms of processing, undergoes a calcium-dependent proteolytic cleavage at Arg-213 by CAPN2 in the endoplasmic reticulum. The result is the production of two fragments, one of 35 kDa containing the C-terminal olfactomedin-like domain, and another of 20 kDa containing the N-terminal leucine zipper-like domain. Glycosylated.

The protein localises to the secreted. The protein resides in the golgi apparatus. Its subcellular location is the cytoplasmic vesicle. It is found in the extracellular space. It localises to the extracellular matrix. The protein localises to the extracellular exosome. The protein resides in the mitochondrion. Its subcellular location is the mitochondrion intermembrane space. It is found in the mitochondrion inner membrane. It localises to the mitochondrion outer membrane. The protein localises to the rough endoplasmic reticulum. The protein resides in the cell projection. Its subcellular location is the cilium. It is found in the endoplasmic reticulum. In terms of biological role, secreted glycoprotein regulating the activation of different signaling pathways in adjacent cells to control different processes including cell adhesion, cell-matrix adhesion, cytoskeleton organization and cell migration. Promotes substrate adhesion, spreading and formation of focal contacts. Negatively regulates cell-matrix adhesion and stress fiber assembly through Rho protein signal transduction. Modulates the organization of actin cytoskeleton by stimulating the formation of stress fibers through interactions with components of Wnt signaling pathways. Promotes cell migration through activation of PTK2 and the downstream phosphatidylinositol 3-kinase signaling. Plays a role in bone formation and promotes osteoblast differentiation in a dose-dependent manner through mitogen-activated protein kinase signaling. Mediates myelination in the peripheral nervous system through ERBB2/ERBB3 signaling. Plays a role as a regulator of muscle hypertrophy through the components of dystrophin-associated protein complex. Involved in positive regulation of mitochondrial depolarization. Plays a role in neurite outgrowth. May participate in the obstruction of fluid outflow in the trabecular meshwork. The polypeptide is Myocilin (MYOC) (Macaca fascicularis (Crab-eating macaque)).